The sequence spans 352 residues: MHFLDQAKIFIRSGQGGPGAVSFRREKYVEYGGPDGGDGGKGGDIIFEAVTGLNTLIDFRYAQHFKAQRGHGGAGKNRTGAGGNDLVIKVPVGTQVLDDDRETVLLDLTEAGQREILLRGGDGGRGNASYKTSTNRAPRQHGPGWPGEEMYVWLRLKLLADAGLVGLPNAGKSTFINQITNTKAKVGDYAFTTLRPQLGVVRHRNREFVLADIPGLIEGAADGAGIGDRFLGHIERCRVLIHLIDIHSDVDPVEAMHIVEGELEAYGAGLDEKPRLVALNKIDLVDKELVKAFQDELLEGGADRVFPISGATGKGMDALLDAVLEYLPAATVTERPTGEVEEAEDQKPWSPI.

The 159-residue stretch at 1–159 (MHFLDQAKIF…MYVWLRLKLL (159 aa)) folds into the Obg domain. The interval 122–142 (DGGRGNASYKTSTNRAPRQHG) is disordered. Residues 160–328 (ADAGLVGLPN…LLDAVLEYLP (169 aa)) enclose the OBG-type G domain. GTP contacts are provided by residues 166–173 (GLPNAGKS), 191–195 (FTTLR), 212–215 (DIPG), 280–283 (NKID), and 309–311 (SGA). Residues serine 173 and threonine 193 each coordinate Mg(2+).

This sequence belongs to the TRAFAC class OBG-HflX-like GTPase superfamily. OBG GTPase family. In terms of assembly, monomer. It depends on Mg(2+) as a cofactor.

It localises to the cytoplasm. In terms of biological role, an essential GTPase which binds GTP, GDP and possibly (p)ppGpp with moderate affinity, with high nucleotide exchange rates and a fairly low GTP hydrolysis rate. Plays a role in control of the cell cycle, stress response, ribosome biogenesis and in those bacteria that undergo differentiation, in morphogenesis control. The polypeptide is GTPase Obg (Novosphingobium aromaticivorans (strain ATCC 700278 / DSM 12444 / CCUG 56034 / CIP 105152 / NBRC 16084 / F199)).